A 191-amino-acid chain; its full sequence is Putative zinc metalloprotease MJ0611 (191 aa).

The chain crosses the membrane as a helical span at residues 20 to 40; sequence AIAFIFSYPNFSILVFIISLI. His-49 lines the Zn(2+) pocket. Residue Glu-50 is part of the active site. His-53 contributes to the Zn(2+) binding site. Transmembrane regions (helical) follow at residues 73-93, 110-130, 133-153, and 171-191; these read LILGFILKLVFGATFIAPGAV, LAGPLTNVALAFVFFILMLIF, GSLLYWIGIFGFHINLFLAGF, and PFIWAIVGLPLIGYMLYMMFW.

The protein belongs to the peptidase M50B family. Requires Zn(2+) as cofactor.

The protein localises to the cell membrane. This chain is Putative zinc metalloprotease MJ0611, found in Methanocaldococcus jannaschii (strain ATCC 43067 / DSM 2661 / JAL-1 / JCM 10045 / NBRC 100440) (Methanococcus jannaschii).